A 582-amino-acid polypeptide reads, in one-letter code: Probable DNA ligase (582 aa).

Glutamate 243 serves as a coordination point for ATP. The active-site N6-AMP-lysine intermediate is the lysine 245. ATP-binding residues include arginine 250, arginine 265, glutamate 295, phenylalanine 335, arginine 410, and lysine 416.

The protein belongs to the ATP-dependent DNA ligase family. It depends on Mg(2+) as a cofactor.

It catalyses the reaction ATP + (deoxyribonucleotide)n-3'-hydroxyl + 5'-phospho-(deoxyribonucleotide)m = (deoxyribonucleotide)n+m + AMP + diphosphate.. DNA ligase that seals nicks in double-stranded DNA during DNA replication, DNA recombination and DNA repair. In Dictyoglomus turgidum (strain DSM 6724 / Z-1310), this protein is Probable DNA ligase.